We begin with the raw amino-acid sequence, 116 residues long: Large ribosomal subunit protein bL21c (116 aa).

This sequence belongs to the bacterial ribosomal protein bL21 family. In terms of assembly, part of the 50S ribosomal subunit.

The protein localises to the plastid. It localises to the chloroplast. Its function is as follows. This protein binds to 23S rRNA. In Marchantia polymorpha (Common liverwort), this protein is Large ribosomal subunit protein bL21c.